The following is a 206-amino-acid chain: Small ribosomal subunit protein uS4 (206 aa).

The 61-residue stretch at 96 to 156 folds into the S4 RNA-binding domain; sequence GRLDNVVYRM…EKSKKQARIK (61 aa).

Belongs to the universal ribosomal protein uS4 family. In terms of assembly, part of the 30S ribosomal subunit. Contacts protein S5. The interaction surface between S4 and S5 is involved in control of translational fidelity.

Functionally, one of the primary rRNA binding proteins, it binds directly to 16S rRNA where it nucleates assembly of the body of the 30S subunit. Its function is as follows. With S5 and S12 plays an important role in translational accuracy. The sequence is that of Small ribosomal subunit protein uS4 from Haemophilus influenzae (strain 86-028NP).